A 201-amino-acid polypeptide reads, in one-letter code: Small ribosomal subunit protein uS4c (201 aa).

A disordered region spans residues 15–43 (LGALPGLTRKRPRSGSDLRNQSRSGKRSQ). The S4 RNA-binding domain occupies 89–150 (MRLDNILFRL…EQRSRALIQN (62 aa)).

Belongs to the universal ribosomal protein uS4 family. In terms of assembly, part of the 30S ribosomal subunit. Contacts protein S5. The interaction surface between S4 and S5 is involved in control of translational fidelity.

It is found in the plastid. It localises to the chloroplast. One of the primary rRNA binding proteins, it binds directly to 16S rRNA where it nucleates assembly of the body of the 30S subunit. Functionally, with S5 and S12 plays an important role in translational accuracy. The protein is Small ribosomal subunit protein uS4c (rps4) of Drimys granadensis.